A 1387-amino-acid chain; its full sequence is Dicer-like protein 2-1 (1387 aa).

Residues 26–205 form the Helicase ATP-binding domain; that stretch reads MFEASLKENI…LLKIESNLDA (180 aa). 39 to 46 is a binding site for ATP; the sequence is MGTGSGKT. A DEAH box motif is present at residues 146-149; the sequence is DEAH. The region spanning 370–535 is the Helicase C-terminal domain; it reads KFRSLLEFLD…AYEDDERRLR (166 aa). The Dicer dsRNA-binding fold domain occupies 565–659; it reads AVAHLNHFCA…LPFKRNLELK (95 aa). RNase III domains lie at 915 to 1055 and 1094 to 1277; these read ATRL…IDGG and DDHL…IDSH. Mg(2+)-binding residues include glutamate 1133, aspartate 1263, and glutamate 1266.

It belongs to the helicase family. Dicer subfamily. Mg(2+) is required as a cofactor. Requires Mn(2+) as cofactor.

Its function is as follows. Dicer-like endonuclease involved in cleaving double-stranded RNA in the RNA interference (RNAi) pathway. Produces 21 to 25 bp dsRNAs (siRNAs) which target the selective destruction of homologous RNAs leading to sequence-specific suppression of gene expression, called post-transcriptional gene silencing (PTGS). Part of a broad host defense response against viral infection and transposons. The polypeptide is Dicer-like protein 2-1 (dcl2-1) (Aspergillus niger (strain ATCC MYA-4892 / CBS 513.88 / FGSC A1513)).